Reading from the N-terminus, the 966-residue chain is Aminopeptidase N (966 aa).

Residues 1-8 lie on the Cytoplasmic side of the membrane; the sequence is MAKGFYIS. A helical; Signal-anchor for type II membrane protein membrane pass occupies residues 9 to 32; it reads KSLGILGILLGVAALCTIVALSVV. The cytosolic Ser/Thr-rich junction stretch occupies residues 33-65; it reads YRQEKNKNTSQSPSMAPLNPTATSSPATTLDQN. Over 33 to 966 the chain is Extracellular; the sequence is YRQEKNKNTS…VLAWFTANSA (934 aa). Residues Asn-40 and Asn-125 are each glycosylated (N-linked (GlcNAc...) asparagine). The tract at residues 40–61 is disordered; sequence NTSQSPSMAPLNPTATSSPATT. Residues 66–966 form a metalloprotease region; the sequence is LPWNRYRLPK…VLAWFTANSA (901 aa). At Tyr-173 the chain carries Sulfotyrosine. Residues Asn-259 and Asn-315 are each glycosylated (N-linked (GlcNAc...) asparagine). 348–352 lines the substrate pocket; that stretch reads GAMEN. Residue His-384 coordinates Zn(2+). The active-site Proton acceptor is the Glu-385. His-388 and Glu-407 together coordinate Zn(2+). Tyr-415 and Tyr-420 each carry sulfotyrosine. 4 N-linked (GlcNAc...) asparagine glycosylation sites follow: Asn-552, Asn-570, Asn-624, and Asn-734. Intrachain disulfides connect Cys-760–Cys-767 and Cys-797–Cys-833. Residue Asn-817 is glycosylated (N-linked (GlcNAc...) asparagine). The residue at position 852 (Tyr-852) is a Phosphotyrosine. Tyr-912 is modified (sulfotyrosine).

Belongs to the peptidase M1 family. Homodimer. Interacts with SLC6A19. Zn(2+) is required as a cofactor. In terms of processing, sulfated. N- and O-glycosylated. Post-translationally, may undergo proteolysis and give rise to a soluble form.

It localises to the cell membrane. It catalyses the reaction Release of an N-terminal amino acid, Xaa-|-Yaa- from a peptide, amide or arylamide. Xaa is preferably Ala, but may be most amino acids including Pro (slow action). When a terminal hydrophobic residue is followed by a prolyl residue, the two may be released as an intact Xaa-Pro dipeptide.. Its function is as follows. Broad specificity aminopeptidase which plays a role in the final digestion of peptides generated from hydrolysis of proteins by gastric and pancreatic proteases. Also involved in the processing of various peptides including peptide hormones, such as angiotensin III and IV, neuropeptides, and chemokines. May also be involved the cleavage of peptides bound to major histocompatibility complex class II molecules of antigen presenting cells. May have a role in angiogenesis and promote cholesterol crystallization. May have a role in amino acid transport by acting as binding partner of amino acid transporter SLC6A19 and regulating its activity. This Oryctolagus cuniculus (Rabbit) protein is Aminopeptidase N (ANPEP).